A 147-amino-acid chain; its full sequence is Hemoglobin subunit rho (147 aa).

The Globin domain occupies 3–147 (HWSAEEKQLI…VAHALAYKYH (145 aa)). His64 and His93 together coordinate heme b.

It belongs to the globin family.

Its function is as follows. The rho chain is the major early embryonic beta-type hemoglobin chain. The protein is Hemoglobin subunit rho of Gallus gallus (Chicken).